Consider the following 106-residue polypeptide: Protein Rev (106 aa).

The tract at residues 8–16 is homomultimerization; sequence VIKFLYQSN. A disordered region spans residues 13–36; the sequence is YQSNPPPRPEGTRQARRNRRRRWR. The short motif at 24–40 is the Nuclear localization signal and RNA-binding (RRE) element; that stretch reads TRQARRNRRRRWRARQR. The span at 26-36 shows a compositional bias: basic residues; it reads QARRNRRRRWR. The Nuclear export signal and binding to XPO1 signature appears at 63-74; sequence LQLPPLERLTLD. 2 positions are modified to phosphoserine; by host: serine 82 and serine 89.

This sequence belongs to the HIV-1 REV protein family. As to quaternary structure, homomultimer; when bound to the RRE. Multimeric assembly is essential for activity and may involve XPO1. Binds to human KPNB1, XPO1, TNPO1, RANBP5 and IPO7. Interacts with the viral Integrase. Interacts with human KHDRBS1. Interacts with human NAP1; this interaction decreases Rev multimerization and stimulates its activity. Interacts with human DEAD-box helicases DDX3 and DDX24; these interactions may serve for viral RNA export to the cytoplasm and packaging, respectively. Interacts with human PSIP1; this interaction may inhibit HIV-1 DNA integration by promoting dissociation of the Integrase-LEDGF/p75 complex. Post-translationally, asymmetrically arginine dimethylated at one site by host PRMT6. Methylation impairs the RNA-binding activity and export of viral RNA from the nucleus to the cytoplasm. In terms of processing, phosphorylated by protein kinase CK2. Presence of, and maybe binding to the N-terminus of the regulatory beta subunit of CK2 is necessary for CK2-mediated Rev's phosphorylation.

It localises to the host nucleus. The protein resides in the host nucleolus. It is found in the host cytoplasm. In terms of biological role, escorts unspliced or incompletely spliced viral pre-mRNAs (late transcripts) out of the nucleus of infected cells. These pre-mRNAs carry a recognition sequence called Rev responsive element (RRE) located in the env gene, that is not present in fully spliced viral mRNAs (early transcripts). This function is essential since most viral proteins are translated from unspliced or partially spliced pre-mRNAs which cannot exit the nucleus by the pathway used by fully processed cellular mRNAs. Rev itself is translated from a fully spliced mRNA that readily exits the nucleus. Rev's nuclear localization signal (NLS) binds directly to KPNB1/Importin beta-1 without previous binding to KPNA1/Importin alpha-1. KPNB1 binds to the GDP bound form of RAN (Ran-GDP) and targets Rev to the nucleus. In the nucleus, the conversion from Ran-GDP to Ran-GTP dissociates Rev from KPNB1 and allows Rev's binding to the RRE in viral pre-mRNAs. Rev multimerization on the RRE via cooperative assembly exposes its nuclear export signal (NES) to the surface. Rev can then form a complex with XPO1/CRM1 and Ran-GTP, leading to nuclear export of the complex. Conversion from Ran-GTP to Ran-GDP mediates dissociation of the Rev/RRE/XPO1/RAN complex, so that Rev can return to the nucleus for a subsequent round of export. Beside KPNB1, also seems to interact with TNPO1/Transportin-1, RANBP5/IPO5 and IPO7/RANBP7 for nuclear import. The nucleoporin-like HRB/RIP is an essential cofactor that probably indirectly interacts with Rev to release HIV RNAs from the perinuclear region to the cytoplasm. The protein is Protein Rev of Homo sapiens (Human).